The primary structure comprises 427 residues: Anaerobic glycerol-3-phosphate dehydrogenase subunit B (427 aa).

The protein belongs to the anaerobic G-3-P dehydrogenase subunit B family. As to quaternary structure, composed of a catalytic GlpA/B dimer and of membrane bound GlpC. The cofactor is FMN.

The enzyme catalyses a quinone + sn-glycerol 3-phosphate = dihydroxyacetone phosphate + a quinol. The protein operates within polyol metabolism; glycerol degradation via glycerol kinase pathway; glycerone phosphate from sn-glycerol 3-phosphate (anaerobic route): step 1/1. In terms of biological role, conversion of glycerol 3-phosphate to dihydroxyacetone. Uses fumarate or nitrate as electron acceptor. This chain is Anaerobic glycerol-3-phosphate dehydrogenase subunit B, found in Glaesserella parasuis serovar 5 (strain SH0165) (Haemophilus parasuis).